A 59-amino-acid chain; its full sequence is Small ribosomal subunit protein bS21 (59 aa).

A disordered region spans residues 39–59 (ETPVEKYKRKQRLKNRTKRRR). The segment covering 45–59 (YKRKQRLKNRTKRRR) has biased composition (basic residues).

It belongs to the bacterial ribosomal protein bS21 family.

The protein is Small ribosomal subunit protein bS21 of Prochlorococcus marinus (strain SARG / CCMP1375 / SS120).